The chain runs to 149 residues: Large ribosomal subunit protein bL9 (149 aa).

The protein belongs to the bacterial ribosomal protein bL9 family.

Binds to the 23S rRNA. The sequence is that of Large ribosomal subunit protein bL9 from Cutibacterium acnes (strain DSM 16379 / KPA171202) (Propionibacterium acnes).